Here is a 745-residue protein sequence, read N- to C-terminus: MMTQAQTYFYDGSDVALLNGQYTDVFSLLGMHSINEGKALVVRCFLRNAQKVDVISLKDGRKVASLERVNEAGLFAGTLGRRVKPFLYALRVVYPLCELDIIDPYQFGSLLDSQDLYLFGEGSSEQAYRFLGANWRQVDSVEGVHFCVWAPNAKRVSVVGDFNHWDDTRHVMRQHMANGLWEIFLPDVAEGTHYKFDLVYQNGERHAKSDPMATQMECAPHNASIVPKKHQHPWADTQWMHKRATTAWHRAAMSIYEVQLGSWRRKGEFGEQYFDYQDLIEQLIPYVKEQGFTHIELMPVSEYPFDGSWGYQPVGLYAPTHRFGDANGLKAFIDACHQAEIGVLLDWVAAHFPKDPHGLVRFDGTCLYEHEDPRKGTHPDWDTLIYNYDRGEVRSFLLSNACYWLREFHLDGLRLDAVSSMLYLDYSREPGQWLPNAYGGRENLEAIHFLQMLNQRLYQAFPGICMIAEESTAFAGVTKPTDSGGLGFGFKWNMGWMNDSLSYLGRDPIYRQYHHNQLTFSLMYAYSEQFMLSISHDEVVHGKGSLLHKIPGDDWQKFATLKAYYGFMWGHPGKKLLFMGSEFAQRDEWNHNHSLDWHLLAFEPHQGVQRWLRDLNQLYRQFPALSVLDYESQGFRWLDCDNGRDSIFSFVRYGEGSDVPLVFVVNMTPTLHQGFRIGLPQGGDFCEYLNSDSHLYGGSNQGNAGKVIAEDLPWQGMASSALITVPPLGCLILGPATDAPRDTSL.

Catalysis depends on aspartate 416, which acts as the Nucleophile. The Proton donor role is filled by glutamate 469.

This sequence belongs to the glycosyl hydrolase 13 family. GlgB subfamily. Monomer.

It catalyses the reaction Transfers a segment of a (1-&gt;4)-alpha-D-glucan chain to a primary hydroxy group in a similar glucan chain.. It functions in the pathway glycan biosynthesis; glycogen biosynthesis. Catalyzes the formation of the alpha-1,6-glucosidic linkages in glycogen by scission of a 1,4-alpha-linked oligosaccharide from growing alpha-1,4-glucan chains and the subsequent attachment of the oligosaccharide to the alpha-1,6 position. This is 1,4-alpha-glucan branching enzyme GlgB from Shewanella sp. (strain MR-4).